Here is a 265-residue protein sequence, read N- to C-terminus: Apolipoprotein A-I (265 aa).

Residues 1-18 form the signal peptide; that stretch reads MKAVVLAVAALFLAGGEA. Repeat copies occupy residues 68–89 and 90–111. A 10 X approximate tandem repeats region spans residues 68–265; that stretch reads LKLTENLDTL…EEASKKLSSQ (198 aa). Methionine sulfoxide is present on Met110. A 3; half-length repeat occupies 112-122; that stretch reads KDLADMKQKVQ. 3 consecutive repeat copies span residues 123–144, 145–166, and 167–188. One copy of the 7; truncated repeat lies at 189–208; that stretch reads PYSEQMRERLAERLAALRDS. Residue Met194 is modified to Methionine sulfoxide. Residues 209–230 form repeat 8; the sequence is PSLAEYQAKAHEHLKTLHEKAQ. The stretch at 231 to 241 is one 9; half-length repeat; it reads PALSDLGQGVL. Residues 242–265 form repeat 10; it reads PVLESLKATLVGAIEEASKKLSSQ.

This sequence belongs to the apolipoprotein A1/A4/E family. As to quaternary structure, homodimer. Interacts with APOA1BP and CLU. Component of a sperm activating protein complex (SPAP), consisting of APOA1, an immunoglobulin heavy chain, an immunoglobulin light chain and albumin. Interacts with NDRG1. Interacts with SCGB3A2. Interacts with NAXE and YJEFN3. Glycosylated. Post-translationally, palmitoylated. In terms of processing, phosphorylation sites are present in the extracellular medium.

Its subcellular location is the secreted. In terms of biological role, participates in the reverse transport of cholesterol from tissues to the liver for excretion by promoting cholesterol efflux from tissues and by acting as a cofactor for the lecithin cholesterol acyltransferase (LCAT). As part of the SPAP complex, activates spermatozoa motility. In Dipodomys ordii (Ord's kangaroo rat), this protein is Apolipoprotein A-I (Apoa1).